The sequence spans 184 residues: MYVIAGLGNPGREYEGTRHNVGFMVIDELAKKLGMNVTKLKFKSLVGEGNFKGEKIILLKPQTFVNSSGEALYDAVNFYKIPLENVIVIYDDKDLDVGKIRIRKKGSSGGHNGMNSIIYLLNSEEFPRVRIGIGKPQKDLVSHVLGKFEESEKKLIDEAVIKAADAVIDIIENGIEHAMSKFNG.

Y14 is a tRNA binding site. H19 serves as the catalytic Proton acceptor. 3 residues coordinate tRNA: F64, N66, and N112.

This sequence belongs to the PTH family. As to quaternary structure, monomer.

Its subcellular location is the cytoplasm. The catalysed reaction is an N-acyl-L-alpha-aminoacyl-tRNA + H2O = an N-acyl-L-amino acid + a tRNA + H(+). Its function is as follows. Hydrolyzes ribosome-free peptidyl-tRNAs (with 1 or more amino acids incorporated), which drop off the ribosome during protein synthesis, or as a result of ribosome stalling. In terms of biological role, catalyzes the release of premature peptidyl moieties from peptidyl-tRNA molecules trapped in stalled 50S ribosomal subunits, and thus maintains levels of free tRNAs and 50S ribosomes. The polypeptide is Peptidyl-tRNA hydrolase (Thermoanaerobacter pseudethanolicus (strain ATCC 33223 / 39E) (Clostridium thermohydrosulfuricum)).